The sequence spans 154 residues: SsrA-binding protein (154 aa).

A disordered region spans residues K132 to E154.

It belongs to the SmpB family.

It is found in the cytoplasm. In terms of biological role, required for rescue of stalled ribosomes mediated by trans-translation. Binds to transfer-messenger RNA (tmRNA), required for stable association of tmRNA with ribosomes. tmRNA and SmpB together mimic tRNA shape, replacing the anticodon stem-loop with SmpB. tmRNA is encoded by the ssrA gene; the 2 termini fold to resemble tRNA(Ala) and it encodes a 'tag peptide', a short internal open reading frame. During trans-translation Ala-aminoacylated tmRNA acts like a tRNA, entering the A-site of stalled ribosomes, displacing the stalled mRNA. The ribosome then switches to translate the ORF on the tmRNA; the nascent peptide is terminated with the 'tag peptide' encoded by the tmRNA and targeted for degradation. The ribosome is freed to recommence translation, which seems to be the essential function of trans-translation. The polypeptide is SsrA-binding protein (Acaryochloris marina (strain MBIC 11017)).